The following is a 201-amino-acid chain: Regulator of G-protein signaling 1 (201 aa).

Residues 75 to 191 form the RGS domain; sequence SLEKLLISED…LKSEIFLRLA (117 aa).

It localises to the cell membrane. The protein resides in the cytoplasm. Its subcellular location is the cytosol. In terms of biological role, regulates G protein-coupled receptor signaling cascades, including signaling downstream of the N-formylpeptide chemoattractant receptors and leukotriene receptors. Inhibits B cell chemotaxis. Inhibits signal transduction by increasing the GTPase activity of G protein alpha subunits, thereby driving them into their inactive GDP-bound form. This is Regulator of G-protein signaling 1 (rgs1) from Xenopus tropicalis (Western clawed frog).